Consider the following 273-residue polypeptide: ATP synthase subunit a (273 aa).

A run of 7 helical transmembrane segments spans residues 34–54 (IINM…CLFM), 94–114 (FIAP…SLDF), 115–135 (LPVD…LITH), 143–163 (DLNG…FYNI), 171–191 (FVHE…NLLL), 218–238 (FLLI…GHVV), and 244–264 (AIFH…LTLV).

The protein belongs to the ATPase A chain family. In terms of assembly, F-type ATPases have 2 components, CF(1) - the catalytic core - and CF(0) - the membrane proton channel. CF(1) has five subunits: alpha(3), beta(3), gamma(1), delta(1), epsilon(1). CF(0) has three main subunits: a(1), b(2) and c(9-12). The alpha and beta chains form an alternating ring which encloses part of the gamma chain. CF(1) is attached to CF(0) by a central stalk formed by the gamma and epsilon chains, while a peripheral stalk is formed by the delta and b chains.

The protein localises to the cell inner membrane. Functionally, key component of the proton channel; it plays a direct role in the translocation of protons across the membrane. This is ATP synthase subunit a from Janthinobacterium sp. (strain Marseille) (Minibacterium massiliensis).